The following is an 84-amino-acid chain: MTRTNKWTEREGKADPKYFSHTGNYGESPNHIKKQGSGKGNWGKPGDEIDDLIDNGEIPPVFKKDRRGSNLQSHEQKFENVQKE.

Over residues 1–18 the composition is skewed to basic and acidic residues; the sequence is MTRTNKWTEREGKADPKY. The segment at 1 to 84 is disordered; sequence MTRTNKWTER…EQKFENVQKE (84 aa). A phosphoserine mark is found at Ser28 and Ser69. The span at 74-84 shows a compositional bias: basic and acidic residues; it reads HEQKFENVQKE.

It belongs to the STF2 family.

Its subcellular location is the mitochondrion. It is found in the cytoplasm. Its function is as follows. Found to stabilize, together with STF1, a complex of intrinsic ATPase inhibitor INH1 and proton-translocating ATPase (F(1)F(0)-ATPase) in mitochondrial membranes. Binds to the F0 part and may function to hold the ATPase inhibitor or STF1 on the F1 subunit. Also acts as a hydrophilins that enhances dry stress tolerance. Cell viability after desiccation and rehydration is due to the antioxidant capacity of the protein, which reduces the number of apoptotic cells during stress conditions by minimising the accumulation of reactive oxygen species (ROS) in the cells. In Saccharomyces cerevisiae (strain ATCC 204508 / S288c) (Baker's yeast), this protein is ATPase-stabilizing factor 15 kDa protein (STF2).